A 426-amino-acid chain; its full sequence is Serine--tRNA ligase (426 aa).

233–235 (TAE) is an L-serine binding site. 264–266 (RAE) provides a ligand contact to ATP. L-serine is bound at residue Glu-287. Position 351–354 (351–354 (EISS)) interacts with ATP. L-serine is bound at residue Ser-387.

It belongs to the class-II aminoacyl-tRNA synthetase family. Type-1 seryl-tRNA synthetase subfamily. Homodimer. The tRNA molecule binds across the dimer.

It is found in the cytoplasm. It catalyses the reaction tRNA(Ser) + L-serine + ATP = L-seryl-tRNA(Ser) + AMP + diphosphate + H(+). The enzyme catalyses tRNA(Sec) + L-serine + ATP = L-seryl-tRNA(Sec) + AMP + diphosphate + H(+). It functions in the pathway aminoacyl-tRNA biosynthesis; selenocysteinyl-tRNA(Sec) biosynthesis; L-seryl-tRNA(Sec) from L-serine and tRNA(Sec): step 1/1. Its function is as follows. Catalyzes the attachment of serine to tRNA(Ser). Is also able to aminoacylate tRNA(Sec) with serine, to form the misacylated tRNA L-seryl-tRNA(Sec), which will be further converted into selenocysteinyl-tRNA(Sec). In Clostridium novyi (strain NT), this protein is Serine--tRNA ligase.